Reading from the N-terminus, the 122-residue chain is Large ribosomal subunit protein eL34 (122 aa).

It belongs to the eukaryotic ribosomal protein eL34 family. As to quaternary structure, component of the large ribosomal subunit. Mature ribosomes consist of a small (40S) and a large (60S) subunit. The 40S subunit contains about 32 different proteins and 1 molecule of RNA (18S). The 60S subunit contains 45 different proteins and 3 molecules of RNA (25S, 5.8S and 5S).

The protein resides in the cytoplasm. Component of the ribosome, a large ribonucleoprotein complex responsible for the synthesis of proteins in the cell. The small ribosomal subunit (SSU) binds messenger RNAs (mRNAs) and translates the encoded message by selecting cognate aminoacyl-transfer RNA (tRNA) molecules. The large subunit (LSU) contains the ribosomal catalytic site termed the peptidyl transferase center (PTC), which catalyzes the formation of peptide bonds, thereby polymerizing the amino acids delivered by tRNAs into a polypeptide chain. The nascent polypeptides leave the ribosome through a tunnel in the LSU and interact with protein factors that function in enzymatic processing, targeting, and the membrane insertion of nascent chains at the exit of the ribosomal tunnel. This chain is Large ribosomal subunit protein eL34, found in Candida albicans (strain SC5314 / ATCC MYA-2876) (Yeast).